The chain runs to 333 residues: DNA-directed RNA polymerase subunit alpha (333 aa).

Positions 1–246 (MKKMVQIKYK…AHLQVIGDVK (246 aa)) are alpha N-terminal domain (alpha-NTD). Positions 262–333 (VEPSIHSVDI…YNVTLNRGEK (72 aa)) are alpha C-terminal domain (alpha-CTD).

It belongs to the RNA polymerase alpha chain family. In terms of assembly, homodimer. The RNAP catalytic core consists of 2 alpha, 1 beta, 1 beta' and 1 omega subunit. When a sigma factor is associated with the core the holoenzyme is formed, which can initiate transcription.

The catalysed reaction is RNA(n) + a ribonucleoside 5'-triphosphate = RNA(n+1) + diphosphate. In terms of biological role, DNA-dependent RNA polymerase catalyzes the transcription of DNA into RNA using the four ribonucleoside triphosphates as substrates. The protein is DNA-directed RNA polymerase subunit alpha of Mycoplasmopsis pulmonis (strain UAB CTIP) (Mycoplasma pulmonis).